The primary structure comprises 202 residues: NADH-quinone oxidoreductase subunit C (202 aa).

It belongs to the complex I 30 kDa subunit family. In terms of assembly, NDH-1 is composed of 14 different subunits. Subunits NuoB, C, D, E, F, and G constitute the peripheral sector of the complex.

The protein localises to the cell inner membrane. The enzyme catalyses a quinone + NADH + 5 H(+)(in) = a quinol + NAD(+) + 4 H(+)(out). NDH-1 shuttles electrons from NADH, via FMN and iron-sulfur (Fe-S) centers, to quinones in the respiratory chain. The immediate electron acceptor for the enzyme in this species is believed to be ubiquinone. Couples the redox reaction to proton translocation (for every two electrons transferred, four hydrogen ions are translocated across the cytoplasmic membrane), and thus conserves the redox energy in a proton gradient. The polypeptide is NADH-quinone oxidoreductase subunit C (Brucella abortus (strain 2308)).